The sequence spans 338 residues: Phosphoribosylformylglycinamidine cyclo-ligase (338 aa).

This sequence belongs to the AIR synthase family.

Its subcellular location is the cytoplasm. The catalysed reaction is 2-formamido-N(1)-(5-O-phospho-beta-D-ribosyl)acetamidine + ATP = 5-amino-1-(5-phospho-beta-D-ribosyl)imidazole + ADP + phosphate + H(+). The protein operates within purine metabolism; IMP biosynthesis via de novo pathway; 5-amino-1-(5-phospho-D-ribosyl)imidazole from N(2)-formyl-N(1)-(5-phospho-D-ribosyl)glycinamide: step 2/2. This Thermoplasma acidophilum (strain ATCC 25905 / DSM 1728 / JCM 9062 / NBRC 15155 / AMRC-C165) protein is Phosphoribosylformylglycinamidine cyclo-ligase.